Here is a 254-residue protein sequence, read N- to C-terminus: Pyruvate dehydrogenase complex repressor (254 aa).

An HTH gntR-type domain is found at 9 to 77 (PKLSDVIEQQ…QGGGTFVQSS (69 aa)). Residues 37-56 (ERELAKQFDVSRPSLREAIQ) constitute a DNA-binding region (H-T-H motif).

In terms of biological role, transcriptional repressor for the pyruvate dehydrogenase complex genes aceEF and lpd. This chain is Pyruvate dehydrogenase complex repressor (pdhR), found in Escherichia coli O6:H1 (strain CFT073 / ATCC 700928 / UPEC).